We begin with the raw amino-acid sequence, 395 residues long: ASTRA-associated protein 1 (395 aa).

3 WD repeats span residues 7-48 (AHVS…PIAS), 221-260 (HYPE…LPVV), and 343-386 (INPG…TGYN).

The protein belongs to the WD repeat ASA1 family. As to quaternary structure, component of the ASTRA chromatin remodeling machinery complex.

The protein localises to the nucleus. Component of the ASTRA complex involved in chromatin remodeling. In Eremothecium gossypii (strain ATCC 10895 / CBS 109.51 / FGSC 9923 / NRRL Y-1056) (Yeast), this protein is ASTRA-associated protein 1 (ASA1).